Consider the following 137-residue polypeptide: MLSPKRTKFRRYHRIRSKGTANCSNTIVFGEFGIQALTCSWITSRQIEAGRRAITRYVKRGGKLWIRIFPDKPITFRPPETRMGSGKGAPELWVSVVRSGNMLYEILGVSEVTARGAMRIASYKLPVKTKFIKKVKN.

This sequence belongs to the universal ribosomal protein uL16 family. Part of the 50S ribosomal subunit.

Its subcellular location is the plastid. The protein localises to the chloroplast. This Bigelowiella natans (Pedinomonas minutissima) protein is Large ribosomal subunit protein uL16c.